We begin with the raw amino-acid sequence, 337 residues long: Glyceraldehyde-3-phosphate dehydrogenase (337 aa).

NAD(+) contacts are provided by residues 13–14 (RI), Asp-35, and Arg-80. D-glyceraldehyde 3-phosphate-binding positions include 151–153 (SCT), Thr-182, 211–212 (TG), and Arg-234. Cys-152 acts as the Nucleophile in catalysis. Asn-316 contributes to the NAD(+) binding site.

Belongs to the glyceraldehyde-3-phosphate dehydrogenase family. As to quaternary structure, homotetramer.

It is found in the cytoplasm. It catalyses the reaction D-glyceraldehyde 3-phosphate + phosphate + NAD(+) = (2R)-3-phospho-glyceroyl phosphate + NADH + H(+). Its pathway is carbohydrate degradation; glycolysis; pyruvate from D-glyceraldehyde 3-phosphate: step 1/5. This Monascus purpureus (Red mold) protein is Glyceraldehyde-3-phosphate dehydrogenase (GPD1).